The following is a 350-amino-acid chain: Ketol-acid reductoisomerase (NADP(+)) (350 aa).

The region spanning 4–187 is the KARI N-terminal Rossmann domain; it reads VSITTDYSRM…GGARANIIKT (184 aa). NADP(+) is bound by residues 30–33, Arg-53, Thr-58, and 88–91; these read YGSQ and DMVQ. Residue His-113 is part of the active site. An NADP(+)-binding site is contributed by Gly-139. Residues 188 to 333 form the KARI C-terminal knotted domain; sequence TFKEETETDL…KQLRAKMVWL (146 aa). 4 residues coordinate Mg(2+): Asp-196, Glu-200, Glu-232, and Glu-236. Ser-257 contacts substrate.

The protein belongs to the ketol-acid reductoisomerase family. Requires Mg(2+) as cofactor.

It carries out the reaction (2R)-2,3-dihydroxy-3-methylbutanoate + NADP(+) = (2S)-2-acetolactate + NADPH + H(+). The catalysed reaction is (2R,3R)-2,3-dihydroxy-3-methylpentanoate + NADP(+) = (S)-2-ethyl-2-hydroxy-3-oxobutanoate + NADPH + H(+). It functions in the pathway amino-acid biosynthesis; L-isoleucine biosynthesis; L-isoleucine from 2-oxobutanoate: step 2/4. The protein operates within amino-acid biosynthesis; L-valine biosynthesis; L-valine from pyruvate: step 2/4. In terms of biological role, involved in the biosynthesis of branched-chain amino acids (BCAA). Catalyzes an alkyl-migration followed by a ketol-acid reduction of (S)-2-acetolactate (S2AL) to yield (R)-2,3-dihydroxy-isovalerate. In the isomerase reaction, S2AL is rearranged via a Mg-dependent methyl migration to produce 3-hydroxy-3-methyl-2-ketobutyrate (HMKB). In the reductase reaction, this 2-ketoacid undergoes a metal-dependent reduction by NADPH to yield (R)-2,3-dihydroxy-isovalerate. The protein is Ketol-acid reductoisomerase (NADP(+)) of Xylella fastidiosa (strain 9a5c).